A 761-amino-acid chain; its full sequence is Phosphoribosylformylglycinamidine synthase subunit PurL (761 aa).

His-48 is a catalytic residue. Residues Tyr-51 and Lys-90 each coordinate ATP. A Mg(2+)-binding site is contributed by Glu-92. Substrate contacts are provided by residues 93–96 and Arg-115; that span reads SHNH. His-94 (proton acceptor) is an active-site residue. Residue Asp-116 coordinates Mg(2+). Residue Gln-239 participates in substrate binding. Asp-267 contributes to the Mg(2+) binding site. Residue 311–313 coordinates substrate; that stretch reads ESQ. ATP-binding residues include Asp-499 and Gly-536. Asn-537 serves as a coordination point for Mg(2+). Ser-539 contributes to the substrate binding site.

This sequence belongs to the FGAMS family. As to quaternary structure, monomer. Part of the FGAM synthase complex composed of 1 PurL, 1 PurQ and 2 PurS subunits.

It is found in the cytoplasm. The catalysed reaction is N(2)-formyl-N(1)-(5-phospho-beta-D-ribosyl)glycinamide + L-glutamine + ATP + H2O = 2-formamido-N(1)-(5-O-phospho-beta-D-ribosyl)acetamidine + L-glutamate + ADP + phosphate + H(+). It functions in the pathway purine metabolism; IMP biosynthesis via de novo pathway; 5-amino-1-(5-phospho-D-ribosyl)imidazole from N(2)-formyl-N(1)-(5-phospho-D-ribosyl)glycinamide: step 1/2. Its function is as follows. Part of the phosphoribosylformylglycinamidine synthase complex involved in the purines biosynthetic pathway. Catalyzes the ATP-dependent conversion of formylglycinamide ribonucleotide (FGAR) and glutamine to yield formylglycinamidine ribonucleotide (FGAM) and glutamate. The FGAM synthase complex is composed of three subunits. PurQ produces an ammonia molecule by converting glutamine to glutamate. PurL transfers the ammonia molecule to FGAR to form FGAM in an ATP-dependent manner. PurS interacts with PurQ and PurL and is thought to assist in the transfer of the ammonia molecule from PurQ to PurL. This Thermosynechococcus vestitus (strain NIES-2133 / IAM M-273 / BP-1) protein is Phosphoribosylformylglycinamidine synthase subunit PurL.